The sequence spans 229 residues: MLKYLNQSEAINVDLELFNEYKFSVDQLMELAGLSCAHAVAKCFPAKDFARVLVCCGPGNNGGDGLVCARHLALMGYTPAIYYPKPTPKPLYENLAHQCQRMEICSITECPRVEEAADSYDLIVDALFGFSFKPPVRADFVSVVELLQQTKLPIASVDIPSGWDVEQGKLNDCDLEPTLLISLTAPKLCAKHFKGKHHFLGGRFVPPALQRKYELNLPAYPGNELCLEL.

One can recognise a YjeF N-terminal domain in the interval 10–217 (AINVDLELFN…ALQRKYELNL (208 aa)). 60–64 (NNGGD) lines the (6S)-NADPHX pocket. K(+) contacts are provided by Asn-61 and Asp-125. Residues 129 to 135 (GFSFKPP) and Asp-158 each bind (6S)-NADPHX. Ser-161 serves as a coordination point for K(+).

This sequence belongs to the NnrE/AIBP family. K(+) serves as cofactor.

It carries out the reaction (6R)-NADHX = (6S)-NADHX. It catalyses the reaction (6R)-NADPHX = (6S)-NADPHX. In terms of biological role, catalyzes the epimerization of the S- and R-forms of NAD(P)HX, a damaged form of NAD(P)H that is a result of enzymatic or heat-dependent hydration. This is a prerequisite for the S-specific NAD(P)H-hydrate dehydratase to allow the repair of both epimers of NAD(P)HX. The chain is NAD(P)H-hydrate epimerase from Drosophila virilis (Fruit fly).